Consider the following 270-residue polypeptide: MTQNTVIVNGVAMASRPSQPTHVNVHIHQESALTQLLKAGGSLKKFLFHPGDTVPSTARIGYEQLALGVTQILLGVVSCVLGVCLSLGPWTVLSASGCAFWAGSVVIAAGAGAIVHEKHPGKLAGYISSLLTLAGFATAMAAVVLCVNSFIWQTEPFLYIDTVCDRSDPVFPTTGYRWMRRSQENQWQKEECRAYMQMLRKLFTAIRALFLAVCVLKVIVSLVSLGVGLRNLCGQSSQPLNEEGSEKRLLGENSVPPSPSREQTSTAIVL.

4 helical membrane passes run 65 to 85 (LALGVTQILLGVVSCVLGVCL), 95 to 115 (ASGCAFWAGSVVIAAGAGAIV), 127 to 147 (ISSLLTLAGFATAMAAVVLCV), and 209 to 229 (LFLAVCVLKVIVSLVSLGVGL). Ser-236, Ser-245, Ser-254, and Ser-258 each carry phosphoserine. Residues 237–270 (SQPLNEEGSEKRLLGENSVPPSPSREQTSTAIVL) are disordered. Positions 260-270 (SREQTSTAIVL) are enriched in polar residues.

The protein belongs to the TMEM176 family. Expressed in lung and dermal fibroblasts.

It localises to the nucleus membrane. In terms of biological role, may play a role in the process of maturation of dendritic cells. Required for the development of cerebellar granule cells. The chain is Transmembrane protein 176B (TMEM176B) from Homo sapiens (Human).